Here is a 205-residue protein sequence, read N- to C-terminus: Thiamine-phosphate synthase (205 aa).

4-amino-2-methyl-5-(diphosphooxymethyl)pyrimidine is bound by residues glutamine 37–lysine 41 and asparagine 69. The Mg(2+) site is built by aspartate 70 and aspartate 89. Serine 108 contacts 4-amino-2-methyl-5-(diphosphooxymethyl)pyrimidine. 2-[(2R,5Z)-2-carboxy-4-methylthiazol-5(2H)-ylidene]ethyl phosphate is bound at residue threonine 134–serine 136. Position 137 (lysine 137) interacts with 4-amino-2-methyl-5-(diphosphooxymethyl)pyrimidine. Residues glycine 165 and isoleucine 185–serine 186 each bind 2-[(2R,5Z)-2-carboxy-4-methylthiazol-5(2H)-ylidene]ethyl phosphate.

It belongs to the thiamine-phosphate synthase family. It depends on Mg(2+) as a cofactor.

It carries out the reaction 2-[(2R,5Z)-2-carboxy-4-methylthiazol-5(2H)-ylidene]ethyl phosphate + 4-amino-2-methyl-5-(diphosphooxymethyl)pyrimidine + 2 H(+) = thiamine phosphate + CO2 + diphosphate. The catalysed reaction is 2-(2-carboxy-4-methylthiazol-5-yl)ethyl phosphate + 4-amino-2-methyl-5-(diphosphooxymethyl)pyrimidine + 2 H(+) = thiamine phosphate + CO2 + diphosphate. It catalyses the reaction 4-methyl-5-(2-phosphooxyethyl)-thiazole + 4-amino-2-methyl-5-(diphosphooxymethyl)pyrimidine + H(+) = thiamine phosphate + diphosphate. It participates in cofactor biosynthesis; thiamine diphosphate biosynthesis; thiamine phosphate from 4-amino-2-methyl-5-diphosphomethylpyrimidine and 4-methyl-5-(2-phosphoethyl)-thiazole: step 1/1. Functionally, condenses 4-methyl-5-(beta-hydroxyethyl)thiazole monophosphate (THZ-P) and 2-methyl-4-amino-5-hydroxymethyl pyrimidine pyrophosphate (HMP-PP) to form thiamine monophosphate (TMP). In Clostridium botulinum (strain Kyoto / Type A2), this protein is Thiamine-phosphate synthase.